Here is a 337-residue protein sequence, read N- to C-terminus: Protein MICROTUBULE BINDING PROTEIN 2C (337 aa).

The segment at 80-147 (RGSMTYTKMP…STSSLTEKDR (68 aa)) is disordered. A compositionally biased stretch (basic and acidic residues) spans 89–103 (PSRESLYKKTSEVKG). The segment covering 120–142 (KNVSSSQDGYAENFSTPSSTSSL) has biased composition (polar residues). 3 coiled-coil regions span residues 143 to 194 (TEKD…MKKD), 223 to 250 (VEKL…LQGE), and 294 to 314 (LQKM…AKEN).

This sequence belongs to the microtubule binding protein 2C family. Interacts with KN-1. Binds to tobacco mosaic virus movement protein (TMV-MP) at microtubules. In terms of tissue distribution, constitutively expressed in leaves.

It localises to the cytoplasm. It is found in the cytoskeleton. In terms of biological role, prevents homeodomain proteins (e.g. STM) association to plasmodesmata and, consequently, cell-to-cell transport. Binds to RNA. Alters KN1 RNA-binding capacity. Regulates cytoskeleton (e.g. actin) organization that determinates cell shape. Interferes with cell-to-cell transport of tobacco mosaic virus movement protein (TMV-MP) by mediating its accumulation at microtubules, thus interfering with cell-to-cell virus movement. The protein is Protein MICROTUBULE BINDING PROTEIN 2C of Nicotiana tabacum (Common tobacco).